Reading from the N-terminus, the 227-residue chain is Cytidylate kinase (227 aa).

10 to 18 (GPASSGKST) is an ATP binding site.

Belongs to the cytidylate kinase family. Type 1 subfamily.

It localises to the cytoplasm. It carries out the reaction CMP + ATP = CDP + ADP. The catalysed reaction is dCMP + ATP = dCDP + ADP. The protein is Cytidylate kinase of Streptococcus agalactiae serotype III (strain NEM316).